A 355-amino-acid polypeptide reads, in one-letter code: Alanine racemase (355 aa).

Residue Lys34 is the Proton acceptor; specific for D-alanine of the active site. Position 34 is an N6-(pyridoxal phosphate)lysine (Lys34). A substrate-binding site is contributed by Arg133. Catalysis depends on Tyr249, which acts as the Proton acceptor; specific for L-alanine. Met297 is a substrate binding site.

This sequence belongs to the alanine racemase family. The cofactor is pyridoxal 5'-phosphate.

It carries out the reaction L-alanine = D-alanine. It participates in amino-acid biosynthesis; D-alanine biosynthesis; D-alanine from L-alanine: step 1/1. In terms of biological role, catalyzes the interconversion of L-alanine and D-alanine. May also act on other amino acids. This chain is Alanine racemase (alr), found in Rickettsia africae (strain ESF-5).